The sequence spans 494 residues: uncharacterized protein (494 aa).

VOC domains are found at residues F18–R174 and S229–L408. Fe cation is bound by residues H232, H349, and E460.

The protein belongs to the 4HPPD family. The cofactor is Fe cation.

Functionally, may have dioxygenase activity. This is an uncharacterized protein from Dictyostelium discoideum (Social amoeba).